Consider the following 250-residue polypeptide: NADH-quinone oxidoreductase subunit B 2 (250 aa).

[4Fe-4S] cluster-binding residues include cysteine 41, cysteine 42, cysteine 107, and cysteine 137.

This sequence belongs to the complex I 20 kDa subunit family. As to quaternary structure, NDH-1 is composed of 14 different subunits. Subunits NuoB, C, D, E, F, and G constitute the peripheral sector of the complex. [4Fe-4S] cluster is required as a cofactor.

It is found in the cell membrane. The catalysed reaction is a quinone + NADH + 5 H(+)(in) = a quinol + NAD(+) + 4 H(+)(out). Functionally, NDH-1 shuttles electrons from NADH, via FMN and iron-sulfur (Fe-S) centers, to quinones in the respiratory chain. The immediate electron acceptor for the enzyme in this species is believed to be ubiquinone. Couples the redox reaction to proton translocation (for every two electrons transferred, four hydrogen ions are translocated across the cytoplasmic membrane), and thus conserves the redox energy in a proton gradient. The polypeptide is NADH-quinone oxidoreductase subunit B 2 (Herpetosiphon aurantiacus (strain ATCC 23779 / DSM 785 / 114-95)).